We begin with the raw amino-acid sequence, 271 residues long: 3-methyl-2-oxobutanoate hydroxymethyltransferase (271 aa).

Residues Asp51 and Asp90 each coordinate Mg(2+). Residues 51-52, Asp90, and Lys119 each bind 3-methyl-2-oxobutanoate; that span reads DS. Glu121 is a Mg(2+) binding site. The active-site Proton acceptor is Glu188.

Belongs to the PanB family. As to quaternary structure, homodecamer; pentamer of dimers. Mg(2+) is required as a cofactor.

The protein resides in the cytoplasm. It carries out the reaction 3-methyl-2-oxobutanoate + (6R)-5,10-methylene-5,6,7,8-tetrahydrofolate + H2O = 2-dehydropantoate + (6S)-5,6,7,8-tetrahydrofolate. Its pathway is cofactor biosynthesis; (R)-pantothenate biosynthesis; (R)-pantoate from 3-methyl-2-oxobutanoate: step 1/2. Its function is as follows. Catalyzes the reversible reaction in which hydroxymethyl group from 5,10-methylenetetrahydrofolate is transferred onto alpha-ketoisovalerate to form ketopantoate. This Aromatoleum aromaticum (strain DSM 19018 / LMG 30748 / EbN1) (Azoarcus sp. (strain EbN1)) protein is 3-methyl-2-oxobutanoate hydroxymethyltransferase.